We begin with the raw amino-acid sequence, 435 residues long: Cell adhesion molecule 2 (435 aa).

A signal peptide spans 1-24 (MIWKRSAVLRFYSVCGLLLQGSQG). At 25 to 367 (QFPLTQNVTV…ALAGQNGPDH (343 aa)) the chain is on the extracellular side. The Ig-like V-type domain occupies 27-119 (PLTQNVTVVE…PVKTSKAYLT (93 aa)). 2 N-linked (GlcNAc...) asparagine glycosylation sites follow: N31 and N51. 3 disulfide bridges follow: C44–C104, C146–C203, and C248–C296. Ig-like C2-type domains follow at residues 127 to 219 (PQIS…VAMQ) and 227 to 312 (PSVK…YVLI). The N-linked (GlcNAc...) asparagine glycan is linked to N291. A helical transmembrane segment spans residues 368–388 (ALIGGIVAVVVFVTLCSIFLL). At 389–435 (GRYLARHKGTYLTNEAKGAEDAPDADTAIINAEGSQVNAEEKKEYFI) the chain is on the cytoplasmic side. The residue at position 423 (S423) is a Phosphoserine.

This sequence belongs to the nectin family.

It is found in the cell membrane. The protein localises to the synapse. It localises to the cell projection. The protein resides in the axon. Adhesion molecule that engages in homo- and heterophilic interactions with the other nectin-like family members, leading to cell aggregation. Important for synapse organization, providing regulated trans-synaptic adhesion. Preferentially binds to oligodendrocytes. Its function is as follows. (Microbial infection) Induces cell fusion in neuron infected by a neuropathogenic strain of measles. Interacts with measles hemagglutinin to trigger hyperfusogenic F-mediated membrane fusion and presumably transsynaptic cell-to-cell transmission of the virus. The chain is Cell adhesion molecule 2 (CADM2) from Homo sapiens (Human).